Here is a 796-residue protein sequence, read N- to C-terminus: Leucine--tRNA ligase (796 aa).

The short motif at 40 to 51 is the 'HIGH' region element; sequence PYPSASGLHVGH. Residues 569–573 carry the 'KMSKS' region motif; the sequence is KMSKS. Lys572 is an ATP binding site.

This sequence belongs to the class-I aminoacyl-tRNA synthetase family.

The protein resides in the cytoplasm. It catalyses the reaction tRNA(Leu) + L-leucine + ATP = L-leucyl-tRNA(Leu) + AMP + diphosphate. This chain is Leucine--tRNA ligase, found in Bdellovibrio bacteriovorus (strain ATCC 15356 / DSM 50701 / NCIMB 9529 / HD100).